A 100-amino-acid chain; its full sequence is Sodium-influx-stimulating peptide (100 aa).

The signal sequence occupies residues 1 to 23 (MLSSVALRYLLVLSLAFLAVVTS).

Post-translationally, three disulfide bonds are present. Expressed by the yellow cells, peptidergic (neuroendocrine) neurons of the central nervous system.

In terms of biological role, stimulates integumental Na(+) uptake. Controls the activity of sodium pumps in the integument, pericardium, ureter and nephridial gland. In Lymnaea stagnalis (Great pond snail), this protein is Sodium-influx-stimulating peptide (SIS).